A 119-amino-acid chain; its full sequence is Movement protein TGB2 (119 aa).

The Cytoplasmic segment spans residues 1–13; that stretch reads MVRNNEIGARPNK. The helical transmembrane segment at 14 to 34 threads the bilayer; that stretch reads YWPVVAAVVAICLFGFLTVTN. Topologically, residues 35 to 79 are lumenal; that stretch reads QKHATQSGDNIHKFANGGQYRDGSKSIKYNCNNPRAYNGSSSNIT. The chain crosses the membrane as a helical span at residues 80 to 100; it reads FSQLFLPVLLIGAALYAYLWF. Over 101–119 the chain is Cytoplasmic; that stretch reads TRPDCSVTCRGDCCRSYGG.

This sequence belongs to the virgaviridae/benyvirus TGB2 movement protein family. Interacts with movement protein TGB3. TGB1-TGB3-TGB2 complex formation is enhanced by ATP hydrolysis.

It is found in the host cell junction. It localises to the host plasmodesma. The protein localises to the host endoplasmic reticulum membrane. Its subcellular location is the host cytoplasm. The protein resides in the host cytoskeleton. It is found in the host chloroplast envelope. Its function is as follows. Participates in the transport of viral genome to neighboring plant cells directly through plasmodesmata, without any budding. TGBp2 and TGBp3 are necessary for intracellular delivery of TGBp1-containing vRNPs to plasmodesmata. Can gate plasmodesmata and increase their size exclusion limit. To a lesser extent than TGB3, induces host actin cytoskeleton network thickening, which probably plays a major role in virus cell-to-cell movement. Binds ssRNA in a sequence non-specific manner. This is Movement protein TGB2 from Potato mop-top virus (isolate Potato/Sweden/Sw) (PMTV).